We begin with the raw amino-acid sequence, 880 residues long: Valine--tRNA ligase (880 aa).

The 'HIGH' region motif lies at 48–58 (PNVTGKLHLGH). The 'KMSKS' region signature appears at 524-528 (KMSKS). ATP is bound at residue Lys527. Positions 808–879 (LAGLINIEEE…VKERIAQLRS (72 aa)) form a coiled coil.

It belongs to the class-I aminoacyl-tRNA synthetase family. ValS type 1 subfamily. As to quaternary structure, monomer.

The protein localises to the cytoplasm. It catalyses the reaction tRNA(Val) + L-valine + ATP = L-valyl-tRNA(Val) + AMP + diphosphate. Functionally, catalyzes the attachment of valine to tRNA(Val). As ValRS can inadvertently accommodate and process structurally similar amino acids such as threonine, to avoid such errors, it has a 'posttransfer' editing activity that hydrolyzes mischarged Thr-tRNA(Val) in a tRNA-dependent manner. This is Valine--tRNA ligase from Enterococcus faecalis (strain ATCC 700802 / V583).